A 147-amino-acid chain; its full sequence is uncharacterized protein (147 aa).

The protein belongs to the limonene-1,2-epoxide hydrolase family.

This is an uncharacterized protein from Bacillus subtilis (strain 168).